The primary structure comprises 393 residues: Acetylornithine aminotransferase 1 (393 aa).

Position 131 (Arg-131) interacts with N(2)-acetyl-L-ornithine. Residue 215–218 (DEVQ) coordinates pyridoxal 5'-phosphate. An N6-(pyridoxal phosphate)lysine modification is found at Lys-244. Thr-272 contributes to the N(2)-acetyl-L-ornithine binding site. Residue Thr-273 participates in pyridoxal 5'-phosphate binding.

It belongs to the class-III pyridoxal-phosphate-dependent aminotransferase family. ArgD subfamily. As to quaternary structure, homodimer. Pyridoxal 5'-phosphate is required as a cofactor.

The protein resides in the cytoplasm. The catalysed reaction is N(2)-acetyl-L-ornithine + 2-oxoglutarate = N-acetyl-L-glutamate 5-semialdehyde + L-glutamate. It participates in amino-acid biosynthesis; L-arginine biosynthesis; N(2)-acetyl-L-ornithine from L-glutamate: step 4/4. This chain is Acetylornithine aminotransferase 1, found in Bordetella pertussis (strain Tohama I / ATCC BAA-589 / NCTC 13251).